We begin with the raw amino-acid sequence, 344 residues long: Adenosine kinase (344 aa).

The active site involves D298.

It belongs to the carbohydrate kinase PfkB family. Requires Mg(2+) as cofactor.

It carries out the reaction adenosine + ATP = AMP + ADP + H(+). The protein operates within purine metabolism; AMP biosynthesis via salvage pathway; AMP from adenosine: step 1/1. The sequence is that of Adenosine kinase (ADK) from Schizophyllum commune (Split gill fungus).